The primary structure comprises 277 residues: MSVNSPVRPVMAADILARKGGEPLVCLTAYTTPMARLVDAHCDITLVGDSLGMVVHGLPTTLGVTMEMMILHGKAVARGTSRAMLVIDMPFGSYEESPAQAFANARRLMAETGCAAVKLEGGRHMAGTIRFLVERGIPVMAHVGLTPQAVNALGGYKVQGRGADADRVMEDAIAVAEAGAFSVVLEKVPDGLSQRITQRVAIPTIGIGASAHCDGQVLVLDDMLGLFTDFRPKFVKRYGELGTAADEAIAAYAAEVRARRFPASEHVFPDELKGKQP.

Mg(2+) is bound by residues Asp-49 and Asp-88. 3-methyl-2-oxobutanoate is bound by residues 49–50 (DS), Asp-88, and Lys-118. Mg(2+) is bound at residue Glu-120. Glu-186 serves as the catalytic Proton acceptor.

It belongs to the PanB family. As to quaternary structure, homodecamer; pentamer of dimers. Requires Mg(2+) as cofactor.

The protein resides in the cytoplasm. The enzyme catalyses 3-methyl-2-oxobutanoate + (6R)-5,10-methylene-5,6,7,8-tetrahydrofolate + H2O = 2-dehydropantoate + (6S)-5,6,7,8-tetrahydrofolate. The protein operates within cofactor biosynthesis; (R)-pantothenate biosynthesis; (R)-pantoate from 3-methyl-2-oxobutanoate: step 1/2. Functionally, catalyzes the reversible reaction in which hydroxymethyl group from 5,10-methylenetetrahydrofolate is transferred onto alpha-ketoisovalerate to form ketopantoate. The chain is 3-methyl-2-oxobutanoate hydroxymethyltransferase from Cereibacter sphaeroides (strain ATCC 17025 / ATH 2.4.3) (Rhodobacter sphaeroides).